The chain runs to 387 residues: 3-ketoacyl-CoA thiolase (387 aa).

The active-site Acyl-thioester intermediate is Cys91. Catalysis depends on proton acceptor residues His343 and Cys373.

It belongs to the thiolase-like superfamily. Thiolase family. Heterotetramer of two alpha chains (FadB) and two beta chains (FadA).

Its subcellular location is the cytoplasm. The catalysed reaction is an acyl-CoA + acetyl-CoA = a 3-oxoacyl-CoA + CoA. Its pathway is lipid metabolism; fatty acid beta-oxidation. Its function is as follows. Catalyzes the final step of fatty acid oxidation in which acetyl-CoA is released and the CoA ester of a fatty acid two carbons shorter is formed. The protein is 3-ketoacyl-CoA thiolase of Vibrio cholerae serotype O1 (strain ATCC 39541 / Classical Ogawa 395 / O395).